The primary structure comprises 433 residues: Glutamate-1-semialdehyde 2,1-aminomutase (433 aa).

At Lys266 the chain carries N6-(pyridoxal phosphate)lysine.

The protein belongs to the class-III pyridoxal-phosphate-dependent aminotransferase family. HemL subfamily. In terms of assembly, homodimer. The cofactor is pyridoxal 5'-phosphate.

The protein resides in the cytoplasm. The enzyme catalyses (S)-4-amino-5-oxopentanoate = 5-aminolevulinate. It functions in the pathway porphyrin-containing compound metabolism; protoporphyrin-IX biosynthesis; 5-aminolevulinate from L-glutamyl-tRNA(Glu): step 2/2. The sequence is that of Glutamate-1-semialdehyde 2,1-aminomutase from Psychrobacter cryohalolentis (strain ATCC BAA-1226 / DSM 17306 / VKM B-2378 / K5).